Reading from the N-terminus, the 226-residue chain is Cytidylate kinase (226 aa).

ATP is bound at residue 11-19 (GPASAGKST).

It belongs to the cytidylate kinase family. Type 1 subfamily.

The protein localises to the cytoplasm. It carries out the reaction CMP + ATP = CDP + ADP. It catalyses the reaction dCMP + ATP = dCDP + ADP. The polypeptide is Cytidylate kinase (Pediococcus pentosaceus (strain ATCC 25745 / CCUG 21536 / LMG 10740 / 183-1w)).